Here is a 184-residue protein sequence, read N- to C-terminus: Peptide deformylase (184 aa).

Positions 111 and 154 each coordinate Fe cation. The active site involves glutamate 155. Histidine 158 lines the Fe cation pocket.

It belongs to the polypeptide deformylase family. It depends on Fe(2+) as a cofactor.

It catalyses the reaction N-terminal N-formyl-L-methionyl-[peptide] + H2O = N-terminal L-methionyl-[peptide] + formate. Removes the formyl group from the N-terminal Met of newly synthesized proteins. Requires at least a dipeptide for an efficient rate of reaction. N-terminal L-methionine is a prerequisite for activity but the enzyme has broad specificity at other positions. This is Peptide deformylase from Lactobacillus helveticus (strain DPC 4571).